A 214-amino-acid polypeptide reads, in one-letter code: Cytochrome b (214 aa).

Helical transmembrane passes span 31 to 51, 75 to 96, 111 to 131, and 176 to 196; these read FGSM…FLAF, WIMQ…YIHI, WVSG…GYVL, and FFAL…IHIL. 2 residues coordinate heme b: His81 and His95. Heme b contacts are provided by His180 and His194. His199 lines the a ubiquinone pocket.

Belongs to the cytochrome b family. The cytochrome bc1 complex contains 3 respiratory subunits (MT-CYB, CYC1 and UQCRFS1), 2 core proteins (UQCRC1 and UQCRC2) and probably 6 low-molecular weight proteins. The cofactor is heme b.

Its subcellular location is the mitochondrion inner membrane. Component of the ubiquinol-cytochrome c reductase complex (complex III or cytochrome b-c1 complex) that is part of the mitochondrial respiratory chain. The b-c1 complex mediates electron transfer from ubiquinol to cytochrome c. Contributes to the generation of a proton gradient across the mitochondrial membrane that is then used for ATP synthesis. This is Cytochrome b (MT-CYB) from Gloydius blomhoffii (Mamushi).